Here is a 562-residue protein sequence, read N- to C-terminus: Zinc finger protein 579 (562 aa).

The span at Met1–Gly11 shows a compositional bias: pro residues. The segment at Met1 to Pro45 is disordered. The span at Asp17–Gly35 shows a compositional bias: basic residues. 3 consecutive C2H2-type zinc fingers follow at residues Leu46 to His68, His74 to His96, and Leu102 to His125. Arg94 bears the Omega-N-methylarginine mark. 2 disordered regions span residues His120–Glu154 and Glu166–Gly199. The segment covering Asp187–Glu197 has biased composition (basic and acidic residues). Residue Ser191 is modified to Phosphoserine. 2 consecutive C2H2-type zinc fingers follow at residues His267 to His289 and Phe295 to His317. A disordered region spans residues Ser321–Ala377. The span at Arg340 to Gly367 shows a compositional bias: gly residues. 3 C2H2-type zinc fingers span residues Phe382 to His404, Phe410 to His432, and His439 to His461. Ser486 is subject to Phosphoserine. Positions Ala505–Ala530 are disordered. Residues Pro512–Pro525 show a composition bias toward pro residues.

The protein belongs to the krueppel C2H2-type zinc-finger protein family.

The protein resides in the nucleus. Functionally, may be involved in transcriptional regulation. In Mus musculus (Mouse), this protein is Zinc finger protein 579 (Znf579).